The primary structure comprises 162 residues: Transcription elongation factor GreA (162 aa).

Residues 45 to 74 (ENAEYEAAREKQAFIEGRIKELEDMTARAE) are a coiled coil.

This sequence belongs to the GreA/GreB family.

Functionally, necessary for efficient RNA polymerase transcription elongation past template-encoded arresting sites. The arresting sites in DNA have the property of trapping a certain fraction of elongating RNA polymerases that pass through, resulting in locked ternary complexes. Cleavage of the nascent transcript by cleavage factors such as GreA or GreB allows the resumption of elongation from the new 3'terminus. GreA releases sequences of 2 to 3 nucleotides. The sequence is that of Transcription elongation factor GreA from Rickettsia typhi (strain ATCC VR-144 / Wilmington).